The sequence spans 755 residues: Polycomb protein SUZ12 (755 aa).

3 disordered regions span residues 26-79 (KMGN…RRIS), 333-377 (NANG…SRRA), and 392-420 (AVGR…SDDR). Low complexity predominate over residues 30–42 (KASSQAQKRSQSQ). Composition is skewed to polar residues over residues 43-57 (TGDS…DGSG) and 349-359 (TQPNGTHNEGT). Basic and acidic residues predominate over residues 411 to 420 (GEDHPPSDDR). The C2H2-type zinc-finger motif lies at 436–458 (FACLICGAENERLSQLRAHYMCH). The segment at 580–645 (IDDSWLLLKH…KADWLVSKRS (66 aa)) is polycomb protein VEFS-Box.

Belongs to the VEFS (VRN2-EMF2-FIS2-SU(Z)12) family. As to quaternary structure, component of the polycomb repressive complex 2 (PRC2) that consists of four core subunits icluding EZH2, EED, SUZ12, and RBBP4, among which EZH2 is the catalytic subunit and which minimally requires EED and SUZ12 for catalysis.

It is found in the nucleus. Its function is as follows. Component of the of the Polycomb Repressive Complex 2 (PRC2), a histone H3 lysine methyltransferase responsible for generating mono-, di-, and tri-methylation on Lys27 (H3K27me1, H3K27me2 and H3K27me3). The tri-methylated form is known to be critical in gene repression, and its proper placement is essential in defining repression patterns during development. SUZ12 is not a catalytic subunit but is required for the complex regulation of histone H3 lysine methylation by EZH2. The sequence is that of Polycomb protein SUZ12 from Chaetomium thermophilum (strain DSM 1495 / CBS 144.50 / IMI 039719) (Thermochaetoides thermophila).